We begin with the raw amino-acid sequence, 253 residues long: MLIQDTIFYRPDWRWHNFLKYLTNNLSKYNCLEKTIPSEYSYKDSTYGSKKSKKNVNLSTWGVTHKKRIKFARAVCINSPNYSVLNFLIIPNTIYNVPFFGVDFVSLPNSYLLVLDFQPSLKIQNQYNNDLLEKLIKLKNHCHSSLPLAEKMSADVARFFSPGVIWSKLPKEERSDFLITNQLYTSFKEYLDLYLEILFESKEVNIELQKELTNGQINYLNYRRDNDPARPMLSSLFGQEFTESLIEEVLFTT.

Belongs to the HY2 family.

The catalysed reaction is (3Z)-phycoerythrobilin + oxidized 2[4Fe-4S]-[ferredoxin] = 15,16-dihydrobiliverdin + reduced 2[4Fe-4S]-[ferredoxin] + 2 H(+). Catalyzes the two-electron reduction of the C2 and C3(1) diene system of 15,16-dihydrobiliverdin. This chain is Phycoerythrobilin:ferredoxin oxidoreductase, found in Prochlorococcus marinus (strain AS9601).